We begin with the raw amino-acid sequence, 263 residues long: MATPVKKWLLRVAPWFLPVGIVAVWQLASSVGWLSTRILPSPEGVVTAFWTLSASGELWQHLAISSWRALIGFSIGGSLGLILGLISGLSRWGERLLDTSIQMLRNVPHLALIPLVILWFGIDESAKIFLVALGTLFPIYINTWHGIRNIDRGLVEMARSYGLSGIPLFIHVILPGALPSIMVGVRFALGLMWLTLIVAETISANSGIGYLAMNAREFLQTDVVVVAIILYALLGKLADVSAQLLERLWLRWNPAYHLKEATV.

Residues 1 to 13 (MATPVKKWLLRVA) lie on the Cytoplasmic side of the membrane. Residues 14-34 (PWFLPVGIVAVWQLASSVGWL) traverse the membrane as a helical segment. The Periplasmic segment spans residues 35–43 (STRILPSPE). The helical transmembrane segment at 44-64 (GVVTAFWTLSASGELWQHLAI) threads the bilayer. The ABC transmembrane type-1 domain occupies 58–242 (LWQHLAISSW…LLGKLADVSA (185 aa)). Topologically, residues 65-68 (SSWR) are cytoplasmic. The chain crosses the membrane as a helical span at residues 69–89 (ALIGFSIGGSLGLILGLISGL). Over 90 to 102 (SRWGERLLDTSIQ) the chain is Periplasmic. Residues 103 to 122 (MLRNVPHLALIPLVILWFGI) form a helical membrane-spanning segment. Residues 123–125 (DES) lie on the Cytoplasmic side of the membrane. Residues 126-148 (AKIFLVALGTLFPIYINTWHGIR) traverse the membrane as a helical segment. The Periplasmic segment spans residues 149–164 (NIDRGLVEMARSYGLS). The helical transmembrane segment at 165–185 (GIPLFIHVILPGALPSIMVGV) threads the bilayer. Residues 186-187 (RF) are Cytoplasmic-facing. The helical transmembrane segment at 188 to 208 (ALGLMWLTLIVAETISANSGI) threads the bilayer. Residues 209-217 (GYLAMNARE) are Periplasmic-facing. The helical transmembrane segment at 218–238 (FLQTDVVVVAIILYALLGKLA) threads the bilayer. The Cytoplasmic segment spans residues 239-263 (DVSAQLLERLWLRWNPAYHLKEATV).

Belongs to the binding-protein-dependent transport system permease family. CysTW subfamily.

The protein localises to the cell inner membrane. In terms of biological role, part of a binding-protein-dependent transport system for aliphatic sulfonates. Probably responsible for the translocation of the substrate across the membrane. The polypeptide is Putative aliphatic sulfonates transport permease protein SsuC (ssuC) (Escherichia coli (strain K12)).